Reading from the N-terminus, the 451-residue chain is Probable NADH dehydrogenase (451 aa).

41–71 contributes to the FAD binding site; that stretch reads KLIILGCGWGSYSFLKNLNSIKYDITVISPR. An NAD(+)-binding site is contributed by 199-236; the sequence is LSFVIVGGGATGIEFTSELNDFFSEDLSRLFPFVPVNE.

Belongs to the NADH dehydrogenase family. Requires FAD as cofactor.

The enzyme catalyses a ubiquinone + NADH + 5 H(+)(in) = a ubiquinol + NAD(+) + 4 H(+)(out). This Dictyostelium discoideum (Social amoeba) protein is Probable NADH dehydrogenase.